Here is a 311-residue protein sequence, read N- to C-terminus: Putative ribose-phosphate pyrophosphokinase 2 (311 aa).

Residues 38-40 (DGE) and 97-98 (RQ) contribute to the ATP site. Residues His-131 and Asp-171 each contribute to the Mg(2+) site. Asp-219 contributes to the D-ribose 5-phosphate binding site.

Belongs to the ribose-phosphate pyrophosphokinase family. Class I subfamily. In terms of assembly, homohexamer. Mg(2+) serves as cofactor.

Its subcellular location is the cytoplasm. The enzyme catalyses D-ribose 5-phosphate + ATP = 5-phospho-alpha-D-ribose 1-diphosphate + AMP + H(+). It participates in metabolic intermediate biosynthesis; 5-phospho-alpha-D-ribose 1-diphosphate biosynthesis; 5-phospho-alpha-D-ribose 1-diphosphate from D-ribose 5-phosphate (route I): step 1/1. Its function is as follows. Involved in the biosynthesis of the central metabolite phospho-alpha-D-ribosyl-1-pyrophosphate (PRPP) via the transfer of pyrophosphoryl group from ATP to 1-hydroxyl of ribose-5-phosphate (Rib-5-P). This is Putative ribose-phosphate pyrophosphokinase 2 from Listeria innocua serovar 6a (strain ATCC BAA-680 / CLIP 11262).